We begin with the raw amino-acid sequence, 450 residues long: Probable glucan endo-1,3-beta-glucosidase eglC (450 aa).

The N-terminal stretch at M1–A18 is a signal peptide. Residue E128 is the Proton donor of the active site. N-linked (GlcNAc...) asparagine glycosylation occurs at N183. Residue E239 is the Nucleophile of the active site. N362 and N368 each carry an N-linked (GlcNAc...) asparagine glycan. Composition is skewed to low complexity over residues S377–S395 and A405–S420. Residues S377–S420 form a disordered region. A lipid anchor (GPI-anchor amidated asparagine) is attached at N427. The propeptide at A428 to L450 is removed in mature form.

The protein belongs to the glycosyl hydrolase 17 family. Post-translationally, the GPI-anchor is attached to the protein in the endoplasmic reticulum and serves to target the protein to the cell surface. There, the glucosamine-inositol phospholipid moiety is cleaved off and the GPI-modified mannoprotein is covalently attached via its lipidless GPI glycan remnant to the 1,6-beta-glucan of the outer cell wall layer.

The protein resides in the cell membrane. Its subcellular location is the secreted. It is found in the cell wall. The enzyme catalyses Hydrolysis of (1-&gt;3)-beta-D-glucosidic linkages in (1-&gt;3)-beta-D-glucans.. Functionally, glucanases play a role in cell expansion during growth, in cell-cell fusion during mating, and in spore release during sporulation. This enzyme may be involved in beta-glucan degradation and also function biosynthetically as a transglycosylase. The protein is Probable glucan endo-1,3-beta-glucosidase eglC (eglC) of Aspergillus fumigatus (strain CBS 144.89 / FGSC A1163 / CEA10) (Neosartorya fumigata).